The following is a 131-amino-acid chain: Fluoride-specific ion channel FluC 2 (131 aa).

Transmembrane regions (helical) follow at residues phenylalanine 5–valine 25, leucine 39–alanine 59, leucine 70–serine 90, and leucine 104–alanine 124. Na(+)-binding residues include glycine 78 and threonine 81.

It belongs to the fluoride channel Fluc/FEX (TC 1.A.43) family.

Its subcellular location is the cell membrane. The enzyme catalyses fluoride(in) = fluoride(out). With respect to regulation, na(+) is not transported, but it plays an essential structural role and its presence is essential for fluoride channel function. Fluoride-specific ion channel. Important for reducing fluoride concentration in the cell, thus reducing its toxicity. The chain is Fluoride-specific ion channel FluC 2 from Deinococcus geothermalis (strain DSM 11300 / CIP 105573 / AG-3a).